Here is a 232-residue protein sequence, read N- to C-terminus: Large ribosomal subunit protein uL1 (232 aa).

The protein belongs to the universal ribosomal protein uL1 family. In terms of assembly, part of the 50S ribosomal subunit.

In terms of biological role, binds directly to 23S rRNA. The L1 stalk is quite mobile in the ribosome, and is involved in E site tRNA release. Its function is as follows. Protein L1 is also a translational repressor protein, it controls the translation of the L11 operon by binding to its mRNA. This is Large ribosomal subunit protein uL1 from Colwellia psychrerythraea (strain 34H / ATCC BAA-681) (Vibrio psychroerythus).